We begin with the raw amino-acid sequence, 130 residues long: Small ribosomal subunit protein uS9 (130 aa).

It belongs to the universal ribosomal protein uS9 family.

The chain is Small ribosomal subunit protein uS9 from Syntrophobacter fumaroxidans (strain DSM 10017 / MPOB).